A 615-amino-acid chain; its full sequence is DNA mismatch repair protein MutL (615 aa).

The disordered stretch occupies residues 363 to 397; the sequence is FAEPAAREPVAPRYSPAPASGSRPAAPWPNAQPGY. The segment covering 364–387 has biased composition (low complexity); that stretch reads AEPAAREPVAPRYSPAPASGSRPA.

The protein belongs to the DNA mismatch repair MutL/HexB family.

In terms of biological role, this protein is involved in the repair of mismatches in DNA. It is required for dam-dependent methyl-directed DNA mismatch repair. May act as a 'molecular matchmaker', a protein that promotes the formation of a stable complex between two or more DNA-binding proteins in an ATP-dependent manner without itself being part of a final effector complex. This Shigella flexneri protein is DNA mismatch repair protein MutL.